Here is a 1100-residue protein sequence, read N- to C-terminus: ATP-dependent DNA helicase mph1 (1100 aa).

Residues 1 to 21 (MSDSDDYLQDDPDDQAFDDFA) show a composition bias toward acidic residues. The disordered stretch occupies residues 1–250 (MSDSDDYLQD…RPSSFMQSSN (250 aa)). The span at 38-61 (RNQTRNTTSRRNEDNSVASDSDSF) shows a compositional bias: low complexity. The span at 84–94 (FADHPENEASS) shows a compositional bias: basic and acidic residues. Polar residues predominate over residues 104–117 (NNPQENIFVTQLTQ). A compositionally biased stretch (pro residues) spans 135-146 (PPPPPPPAPTKP). Composition is skewed to polar residues over residues 182–191 (RLSFSTAQNS) and 200–209 (NAPTNTAQTE). Positions 212–223 (DFLDDIPDDAFD) are enriched in acidic residues. Over residues 237–249 (SNSSRPSSFMQSS) the composition is skewed to low complexity. In terms of domain architecture, Helicase ATP-binding spans 317–485 (ITQKGLFHNL…AVIDGLEISK (169 aa)). 330 to 337 (LPTGLGKT) contacts ATP. The DEAH box signature appears at 433–436 (DEAH). Residues 655-829 (YLKQVVLNHF…GTRFTFHDDK (175 aa)) enclose the Helicase C-terminal domain. Disordered regions lie at residues 850–913 (PEEN…PEPV) and 1003–1100 (RRPA…LGRR). Basic residues-rich tracts occupy residues 863 to 875 (RRGR…PKKF) and 1019 to 1028 (GNKKRLRKGR). A compositionally biased stretch (polar residues) spans 1053–1066 (QPISPEQLLSSFTD). Over residues 1082–1092 (LELDADFEAPD) the composition is skewed to acidic residues.

This sequence belongs to the DEAD box helicase family. DEAH subfamily. FANCM sub-subfamily. Interacts with the MHF histone-fold complex to form the FANCM-MHF complex.

It localises to the nucleus. The catalysed reaction is ATP + H2O = ADP + phosphate + H(+). In terms of biological role, ATP-dependent DNA helicase involved in DNA damage repair by homologous recombination and in genome maintenance. Capable of unwinding D-loops. Plays a role in limiting crossover recombinants during mitotic DNA double-strand break (DSB) repair. Component of a FANCM-MHF complex which promotes gene conversion at blocked replication forks, probably by reversal of the stalled fork. This chain is ATP-dependent DNA helicase mph1, found in Aspergillus terreus (strain NIH 2624 / FGSC A1156).